A 638-amino-acid polypeptide reads, in one-letter code: 1-deoxy-D-xylulose-5-phosphate synthase (638 aa).

Residues His-72 and 113–115 (GHA) contribute to the thiamine diphosphate site. Residue Asp-144 coordinates Mg(2+). Residues 145–146 (GA), Asn-174, Tyr-289, and Glu-372 contribute to the thiamine diphosphate site. Asn-174 contacts Mg(2+).

It belongs to the transketolase family. DXPS subfamily. In terms of assembly, homodimer. The cofactor is Mg(2+). It depends on thiamine diphosphate as a cofactor.

The catalysed reaction is D-glyceraldehyde 3-phosphate + pyruvate + H(+) = 1-deoxy-D-xylulose 5-phosphate + CO2. It functions in the pathway metabolic intermediate biosynthesis; 1-deoxy-D-xylulose 5-phosphate biosynthesis; 1-deoxy-D-xylulose 5-phosphate from D-glyceraldehyde 3-phosphate and pyruvate: step 1/1. Its function is as follows. Catalyzes the acyloin condensation reaction between C atoms 2 and 3 of pyruvate and glyceraldehyde 3-phosphate to yield 1-deoxy-D-xylulose-5-phosphate (DXP). This Gloeobacter violaceus (strain ATCC 29082 / PCC 7421) protein is 1-deoxy-D-xylulose-5-phosphate synthase.